The primary structure comprises 638 residues: Guanylate-binding protein 7 (638 aa).

Residues 1 to 310 (MASGPNMEAP…DAINSGDVPC (310 aa)) form a GTPase domain (Globular) region. Residues 35-277 (TQPVVVVAIV…FCSYIFSNSK (243 aa)) enclose the GB1/RHD3-type G domain. Residues 45-52 (GLYRTGKS), 67-69 (LGT), and 97-101 (DTEGL) each bind GTP. Residues 311-638 (LENAVTTLAQ…TQNSDKVRKL (328 aa)) form an interaction with the CYBA-CYBB complex region. The interval 590–638 (SSLGAKILDGFGDVLISVVPGSGKYFGLGLKILSSQMNQTQNSDKVRKL) is C-terminal tail; required for its localization to cytoplasmic vesicle.

The protein belongs to the TRAFAC class dynamin-like GTPase superfamily. GB1/RHD3 GTPase family. GB1 subfamily. Monomer and dimer. Interacts with CYBA, CYBA-CYBB complex and ATG4B. Interacts (via GB1/RHD3-type G domain) with NCF2 and NCF2-NCF4 complex.

It is found in the cytoplasmic vesicle membrane. The catalysed reaction is GTP + H2O = GDP + phosphate + H(+). It catalyses the reaction GDP + H2O = GMP + phosphate + H(+). With respect to regulation, inhibited by orthovanadate, berylium fluoride and aluminum flouride. In terms of biological role, interferon (IFN)-inducible GTPase that plays important roles in innate immunity against a diverse range of bacterial, viral and protozoan pathogens. Hydrolyzes GTP to GMP in two consecutive cleavage reactions and predominantly uses GTP and not GDP or GMP as the substrate. Following infection, recruited to the pathogen-containing vacuoles or vacuole-escaped bacteria and acts as a positive regulator of inflammasome assembly by promoting the release of inflammasome ligands from bacteria. Acts by promoting lysis of pathogen-containing vacuoles, releasing pathogens into the cytosol. Following pathogen release in the cytosol, promotes recruitment of proteins that mediate bacterial cytolysis, such as Gm12250/Irgb10: this liberates ligands that are detected by inflammasomes, such as lipopolysaccharide (LPS) that activates the non-canonical CASP4/CASP11 inflammasome or double-stranded DNA (dsDNA) that activates the AIM2 inflammasome. Also promotes IFN-gamma-mediated host defense against bacterial infections by regulating oxidative responses and bacteriolytic peptide generation. May help to assemble NADPH oxidase on phagosomal membranes by acting as a bridging protein between NADPH oxidase cytosolic subunits NCF2-NCF4 and the membrane subunits CYBA-CYBB. Participates along with GBP1 in trafficking monoubiquinated protein cargo to autolysosomes for generating ubiquitin-derived antimicrobial peptides. Facilitates influenza A virus replication by inhibiting the activation of NF-kappaB and JAK-STAT signaling pathways and the expression of type I, type III interferons and pro-inflammatory cytokines. Confers protection to several pathogens, including the bacterial pathogens Listeria monocytogenes and Mycobacterium bovis BCG as well as the protozoan pathogen Toxoplasma gondii. Required for disruption of the parasitophorous vacuole formed following T.gondii infection and subsequent killing of the parasite. This chain is Guanylate-binding protein 7 (Gbp7), found in Mus musculus (Mouse).